The sequence spans 843 residues: Translation initiation factor IF-2 (843 aa).

Disordered regions lie at residues 55–185 (AEAV…EDRD) and 209–228 (KVEE…QVKV). Positions 62–106 (PQEKPKKSAPKKEEKPKEEVKKEAEEKVAASKKEEEKPQEKKSVE) are enriched in basic and acidic residues. Basic residues predominate over residues 114-128 (LKKRRGLVIVKKKRP). A compositionally biased stretch (basic and acidic residues) spans 129–141 (KVEPKVEEKEAKQ). Over residues 156 to 165 (LKRKPKKAKK) the composition is skewed to basic residues. Basic and acidic residues-rich tracts occupy residues 171–185 (KKNE…EDRD) and 209–221 (KVEE…EPQK). Residues 342–511 (ERPPVITIMG…LLQAEIMELK (170 aa)) form the tr-type G domain. The tract at residues 351–358 (GHVDHGKT) is G1. 351–358 (GHVDHGKT) contributes to the GTP binding site. The interval 376–380 (GITQH) is G2. The G3 stretch occupies residues 397–400 (DTPG). Residues 397–401 (DTPGH) and 451–454 (NKID) each bind GTP. Positions 451–454 (NKID) are G4. Residues 487–489 (SAK) are G5.

It belongs to the TRAFAC class translation factor GTPase superfamily. Classic translation factor GTPase family. IF-2 subfamily.

The protein localises to the cytoplasm. Its function is as follows. One of the essential components for the initiation of protein synthesis. Protects formylmethionyl-tRNA from spontaneous hydrolysis and promotes its binding to the 30S ribosomal subunits. Also involved in the hydrolysis of GTP during the formation of the 70S ribosomal complex. This is Translation initiation factor IF-2 from Nitratiruptor sp. (strain SB155-2).